The primary structure comprises 201 residues: 7-methyl-GTP pyrophosphatase (201 aa).

Aspartate 73 acts as the Proton acceptor in catalysis.

It belongs to the Maf family. YceF subfamily. A divalent metal cation serves as cofactor.

The protein resides in the cytoplasm. It catalyses the reaction N(7)-methyl-GTP + H2O = N(7)-methyl-GMP + diphosphate + H(+). Nucleoside triphosphate pyrophosphatase that hydrolyzes 7-methyl-GTP (m(7)GTP). May have a dual role in cell division arrest and in preventing the incorporation of modified nucleotides into cellular nucleic acids. The polypeptide is 7-methyl-GTP pyrophosphatase (Thiobacillus denitrificans (strain ATCC 25259 / T1)).